Reading from the N-terminus, the 265-residue chain is Neuronal membrane glycoprotein M6-b (265 aa).

A helical transmembrane segment spans residues 31–51 (GGVPYASLVATILCFSGVALF). An N-linked (GlcNAc...) asparagine glycan is attached at Asn73. The next 2 membrane-spanning stretches (helical) occupy residues 90–110 (VIYG…AEGF) and 136–156 (FVFL…FSAV). N-linked (GlcNAc...) asparagine glycosylation occurs at Asn177. The chain crosses the membrane as a helical span at residues 224 to 244 (LFIVACAGAGATVIALLIYMM). Position 257 is a phosphoserine (Ser257).

It belongs to the myelin proteolipid protein family. Interacts with SERT. In terms of tissue distribution, neurons and glia; cerebellar Bergmann glia, in glia within white matter tracts of the cerebellum and cerebrum, and in embryonic dorsal root ganglia.

The protein resides in the cell membrane. Functionally, may be involved in neural development. Involved in regulation of osteoblast function and bone formation. Involved in matrix vesicle release by osteoblasts; this function seems to involve maintenance of the actin cytoskeleton. May be involved in cellular trafficking of SERT and thereby in regulation of serotonin uptake. The protein is Neuronal membrane glycoprotein M6-b (GPM6B) of Homo sapiens (Human).